A 157-amino-acid chain; its full sequence is MAEKNERAIKVVAENRKARFNYAIEDTVEAGISLTGTEVKSVRGGKATIAESYADSRGGEIWLINATIPEYLQANRFNHEPKRPRKLLLHRKQINKLMGAIERQGMTLVPLKLYFNEKGRAKLLLALAKGKQLHDKRETEKKRDWSREKGRLLRARG.

Residues 136 to 151 (KRETEKKRDWSREKGR) are compositionally biased toward basic and acidic residues. The interval 136–157 (KRETEKKRDWSREKGRLLRARG) is disordered.

It belongs to the SmpB family.

The protein localises to the cytoplasm. Its function is as follows. Required for rescue of stalled ribosomes mediated by trans-translation. Binds to transfer-messenger RNA (tmRNA), required for stable association of tmRNA with ribosomes. tmRNA and SmpB together mimic tRNA shape, replacing the anticodon stem-loop with SmpB. tmRNA is encoded by the ssrA gene; the 2 termini fold to resemble tRNA(Ala) and it encodes a 'tag peptide', a short internal open reading frame. During trans-translation Ala-aminoacylated tmRNA acts like a tRNA, entering the A-site of stalled ribosomes, displacing the stalled mRNA. The ribosome then switches to translate the ORF on the tmRNA; the nascent peptide is terminated with the 'tag peptide' encoded by the tmRNA and targeted for degradation. The ribosome is freed to recommence translation, which seems to be the essential function of trans-translation. This Rhodopseudomonas palustris (strain HaA2) protein is SsrA-binding protein.